The chain runs to 295 residues: Small ribosomal subunit protein uS2 (295 aa).

Positions 263–295 (KKFSKTKNIDEETNTEFEQALNDADENKNSDNA) are disordered.

Belongs to the universal ribosomal protein uS2 family.

This is Small ribosomal subunit protein uS2 from Rickettsia massiliae (strain Mtu5).